A 391-amino-acid polypeptide reads, in one-letter code: uncharacterized protein (391 aa).

2 WD repeats span residues 137-179 (VNDI…PILA) and 182-222 (PLSS…SAEE).

The protein resides in the cytoplasm. Its subcellular location is the nucleus. This is an uncharacterized protein from Schizosaccharomyces pombe (strain 972 / ATCC 24843) (Fission yeast).